Reading from the N-terminus, the 584-residue chain is Arginine--tRNA ligase (584 aa).

The short motif at 126–136 (PNIAKEMHVGH) is the 'HIGH' region element.

Belongs to the class-I aminoacyl-tRNA synthetase family. Monomer.

Its subcellular location is the cytoplasm. The catalysed reaction is tRNA(Arg) + L-arginine + ATP = L-arginyl-tRNA(Arg) + AMP + diphosphate. This chain is Arginine--tRNA ligase, found in Synechococcus elongatus (strain ATCC 33912 / PCC 7942 / FACHB-805) (Anacystis nidulans R2).